The primary structure comprises 318 residues: MEWNGRVDGYDEDILRIHQVIQVKNLDELMENDYTGKKVCFVSYNSNEGIRRNNGRLGAADGWKHLKTALSNFPIFDTDIKFYDLKDPVDVKAGKLEEAQQELAEVVAKLKSKDYFVVCMGGGHDIAYGTYNGILSYAKTQTKDPKVGIISFDAHFDMREYNKGANSGTMFYQIADDCKREGIKFDYNVIGIQRFSNTKRLFDRAKSFGVTYYLAEDILKLSDLNIKPILERNDYIHLTICTDVFHITCAPGVSAPQTFGIWPNQAIGLLNTIAKTKKNLTLEVAEISPRYDYDDRTSRLIANLIYQVILKHFDCEIN.

His-124, Asp-153, His-155, Asp-157, Cys-241, and Asp-243 together coordinate Mn(2+).

Belongs to the arginase family. It depends on Mn(2+) as a cofactor.

It carries out the reaction N-formimidoyl-L-glutamate + H2O = formamide + L-glutamate. It participates in amino-acid degradation; L-histidine degradation into L-glutamate; L-glutamate from N-formimidoyl-L-glutamate (hydrolase route): step 1/1. Catalyzes the conversion of N-formimidoyl-L-glutamate to L-glutamate and formamide. This is Formimidoylglutamase from Fusobacterium nucleatum subsp. nucleatum (strain ATCC 25586 / DSM 15643 / BCRC 10681 / CIP 101130 / JCM 8532 / KCTC 2640 / LMG 13131 / VPI 4355).